The chain runs to 269 residues: 4-hydroxy-tetrahydrodipicolinate reductase (269 aa).

NAD(+) contacts are provided by residues 8 to 13 and E34; that span reads GAAGRM. Residue R35 coordinates NADP(+). NAD(+) is bound by residues 98–100 and 122–125; these read GTT and APNY. The active-site Proton donor/acceptor is H155. H156 lines the (S)-2,3,4,5-tetrahydrodipicolinate pocket. Residue K159 is the Proton donor of the active site. 165-166 lines the (S)-2,3,4,5-tetrahydrodipicolinate pocket; the sequence is GT.

The protein belongs to the DapB family.

It localises to the cytoplasm. It catalyses the reaction (S)-2,3,4,5-tetrahydrodipicolinate + NAD(+) + H2O = (2S,4S)-4-hydroxy-2,3,4,5-tetrahydrodipicolinate + NADH + H(+). The enzyme catalyses (S)-2,3,4,5-tetrahydrodipicolinate + NADP(+) + H2O = (2S,4S)-4-hydroxy-2,3,4,5-tetrahydrodipicolinate + NADPH + H(+). Its pathway is amino-acid biosynthesis; L-lysine biosynthesis via DAP pathway; (S)-tetrahydrodipicolinate from L-aspartate: step 4/4. Functionally, catalyzes the conversion of 4-hydroxy-tetrahydrodipicolinate (HTPA) to tetrahydrodipicolinate. This is 4-hydroxy-tetrahydrodipicolinate reductase from Aliivibrio fischeri (strain ATCC 700601 / ES114) (Vibrio fischeri).